Here is a 276-residue protein sequence, read N- to C-terminus: Diaminopimelate epimerase (276 aa).

Residues Asn13, Gln46, and Asn66 each coordinate substrate. The active-site Proton donor is Cys75. Residues 76–77, Asn159, Asn192, and 210–211 contribute to the substrate site; these read GN and ER. Residue Cys219 is the Proton acceptor of the active site. 220–221 contributes to the substrate binding site; it reads GT.

This sequence belongs to the diaminopimelate epimerase family. As to quaternary structure, homodimer.

The protein resides in the cytoplasm. It carries out the reaction (2S,6S)-2,6-diaminopimelate = meso-2,6-diaminopimelate. Its pathway is amino-acid biosynthesis; L-lysine biosynthesis via DAP pathway; DL-2,6-diaminopimelate from LL-2,6-diaminopimelate: step 1/1. Catalyzes the stereoinversion of LL-2,6-diaminopimelate (L,L-DAP) to meso-diaminopimelate (meso-DAP), a precursor of L-lysine and an essential component of the bacterial peptidoglycan. The polypeptide is Diaminopimelate epimerase (Pseudomonas entomophila (strain L48)).